Here is a 235-residue protein sequence, read N- to C-terminus: Protein LIFEGUARD 1 (235 aa).

Transmembrane regions (helical) follow at residues 33 to 53 (YSIL…VYFV), 67 to 87 (LAVF…LLAF), 95 to 115 (CIVL…CCSL), 120 to 140 (IVLE…IYTF), 149 to 169 (FSFL…FTLL), 178 to 198 (LSSM…IIFD), and 212 to 232 (ITAA…LLGI).

Belongs to the BI1 family. In terms of tissue distribution, expressed at very low in leaves.

The protein localises to the membrane. Functionally, (Microbial infection) Facilitates the development of the powdery mildew fungus E.cruciferarum. (Microbial infection) May prevent cell death upon A.alternata f.sp. lycopersici (AAL) toxin treatment. The sequence is that of Protein LIFEGUARD 1 from Arabidopsis thaliana (Mouse-ear cress).